The primary structure comprises 244 residues: Aliphatic sulfonates import ATP-binding protein SsuB 2 (244 aa).

Residues 13–229 form the ABC transporter domain; the sequence is VQVRSLVRGF…ALGDSKFHEF (217 aa). 45–52 provides a ligand contact to ATP; sequence GKSGSGKS.

Belongs to the ABC transporter superfamily. Aliphatic sulfonates importer (TC 3.A.1.17.2) family. In terms of assembly, the complex is composed of two ATP-binding proteins (SsuB), two transmembrane proteins (SsuC) and a solute-binding protein (SsuA).

It localises to the cell membrane. The catalysed reaction is ATP + H2O + aliphatic sulfonate-[sulfonate-binding protein]Side 1 = ADP + phosphate + aliphatic sulfonateSide 2 + [sulfonate-binding protein]Side 1.. Part of the ABC transporter complex SsuABC involved in aliphatic sulfonates import. Responsible for energy coupling to the transport system. The sequence is that of Aliphatic sulfonates import ATP-binding protein SsuB 2 from Rhodococcus jostii (strain RHA1).